The chain runs to 188 residues: uncharacterized protein (188 aa).

3 consecutive transmembrane segments (helical) span residues 6–26 (MIVFMLLMVEIVSFVILSLPL), 43–63 (FAGRVKHVLKITIICILILFA), and 110–130 (ALFLSLVVNRYYLALEAMIAA).

The protein localises to the membrane. This is an uncharacterized protein from Schizosaccharomyces pombe (strain 972 / ATCC 24843) (Fission yeast).